A 486-amino-acid chain; its full sequence is Cardiolipin synthase A (486 aa).

2 consecutive transmembrane segments (helical) span residues 3–23 and 38–58; these read TFYT…IAGV and MAWL…YLSV. 2 PLD phosphodiesterase domains span residues 219–246 and 399–426; these read MDLR…VDPR and EGGL…DMRS. Residues H224, K226, D231, H404, K406, and D411 contribute to the active site.

The protein belongs to the phospholipase D family. Cardiolipin synthase subfamily. ClsA sub-subfamily.

It is found in the cell inner membrane. The enzyme catalyses 2 a 1,2-diacyl-sn-glycero-3-phospho-(1'-sn-glycerol) = a cardiolipin + glycerol. Functionally, catalyzes the reversible phosphatidyl group transfer from one phosphatidylglycerol molecule to another to form cardiolipin (CL) (diphosphatidylglycerol) and glycerol. This is Cardiolipin synthase A from Cronobacter sakazakii (strain ATCC BAA-894) (Enterobacter sakazakii).